Here is a 98-residue protein sequence, read N- to C-terminus: Putative pterin-4-alpha-carbinolamine dehydratase (98 aa).

Belongs to the pterin-4-alpha-carbinolamine dehydratase family.

It catalyses the reaction (4aS,6R)-4a-hydroxy-L-erythro-5,6,7,8-tetrahydrobiopterin = (6R)-L-erythro-6,7-dihydrobiopterin + H2O. The chain is Putative pterin-4-alpha-carbinolamine dehydratase from Jannaschia sp. (strain CCS1).